The sequence spans 395 residues: MHC class I-like protein MILL1 (395 aa).

The N-terminal stretch at 1–32 is a signal peptide; it reads MLLSRNLRALAAIHLWIVYLLLEDLLGTCAEG. The segment at 57-148 is alpha-1; that stretch reads AVAEPHTLRY…ITAQNGQNTD (92 aa). N-linked (GlcNAc...) asparagine glycans are attached at residues asparagine 98, asparagine 163, and asparagine 199. Residues 149-240 form an alpha-2 region; that stretch reads LHILQATFGC…SLRNGLLNTG (92 aa). Cystine bridges form between cysteine 158–cysteine 221 and cysteine 260–cysteine 317. The tract at residues 241-337 is alpha-3; it reads FPKVIVTFRN…EPAATEAPVY (97 aa). One can recognise an Ig-like C1-type domain in the interval 242-333; that stretch reads PKVIVTFRNY…HNINEPAATE (92 aa). The segment at 332–352 is disordered; sequence TEAPVYGARREQPPTSGVGSR. The interval 338-368 is connecting peptide; the sequence is GARREQPPTSGVGSRVGKSLWSAMTTALVVI. Serine 369 is lipidated: GPI-anchor amidated serine. Positions 370-395 are cleaved as a propeptide — removed in mature form; the sequence is WTLSQKLMGPLLWFCSGGFCSFLQCW.

The protein belongs to the MHC class I family. Heterodimer with B2M. In terms of processing, N-glycosylated. In terms of tissue distribution, expressed in stomach, intestine, uterus, skeletal muscle and heart.

The protein localises to the cell membrane. In Mus musculus (Mouse), this protein is MHC class I-like protein MILL1.